The primary structure comprises 206 residues: Pyridoxine/pyridoxamine 5'-phosphate oxidase (206 aa).

FMN is bound by residues 49 to 54 (RMVLLK), 69 to 70 (YT), lysine 76, and glutamine 98. Lysine 54 serves as a coordination point for substrate. Substrate-binding residues include tyrosine 116, arginine 120, and serine 124. Residues 133–134 (QS) and tryptophan 177 each bind FMN. 183-185 (RLH) is a substrate binding site. Position 187 (arginine 187) interacts with FMN.

This sequence belongs to the pyridoxamine 5'-phosphate oxidase family. As to quaternary structure, homodimer. FMN is required as a cofactor.

It catalyses the reaction pyridoxamine 5'-phosphate + O2 + H2O = pyridoxal 5'-phosphate + H2O2 + NH4(+). It carries out the reaction pyridoxine 5'-phosphate + O2 = pyridoxal 5'-phosphate + H2O2. It functions in the pathway cofactor metabolism; pyridoxal 5'-phosphate salvage; pyridoxal 5'-phosphate from pyridoxamine 5'-phosphate: step 1/1. It participates in cofactor metabolism; pyridoxal 5'-phosphate salvage; pyridoxal 5'-phosphate from pyridoxine 5'-phosphate: step 1/1. Its function is as follows. Catalyzes the oxidation of either pyridoxine 5'-phosphate (PNP) or pyridoxamine 5'-phosphate (PMP) into pyridoxal 5'-phosphate (PLP). This chain is Pyridoxine/pyridoxamine 5'-phosphate oxidase, found in Jannaschia sp. (strain CCS1).